A 380-amino-acid polypeptide reads, in one-letter code: Succinyl-diaminopimelate desuccinylase (380 aa).

Position 70 (His-70) interacts with Zn(2+). The active site involves Asp-72. A Zn(2+)-binding site is contributed by Asp-103. The active-site Proton acceptor is the Glu-137. Residues Glu-138, Glu-166, and His-352 each contribute to the Zn(2+) site.

Belongs to the peptidase M20A family. DapE subfamily. In terms of assembly, homodimer. The cofactor is Zn(2+). Requires Co(2+) as cofactor.

The enzyme catalyses N-succinyl-(2S,6S)-2,6-diaminopimelate + H2O = (2S,6S)-2,6-diaminopimelate + succinate. It functions in the pathway amino-acid biosynthesis; L-lysine biosynthesis via DAP pathway; LL-2,6-diaminopimelate from (S)-tetrahydrodipicolinate (succinylase route): step 3/3. Catalyzes the hydrolysis of N-succinyl-L,L-diaminopimelic acid (SDAP), forming succinate and LL-2,6-diaminopimelate (DAP), an intermediate involved in the bacterial biosynthesis of lysine and meso-diaminopimelic acid, an essential component of bacterial cell walls. The sequence is that of Succinyl-diaminopimelate desuccinylase from Azoarcus sp. (strain BH72).